Here is a 697-residue protein sequence, read N- to C-terminus: Potassium-transporting ATPase ATP-binding subunit (697 aa).

4 helical membrane-spanning segments follow: residues Pro55–Ser75, Ser79–Ala99, Leu245–Phe265, and Val271–Ile291. The active-site 4-aspartylphosphate intermediate is Asp324. Residues Asp361, Glu365, Phe393 to Ser400, and Lys412 contribute to the ATP site. Positions 535 and 539 each coordinate Mg(2+). Helical transmembrane passes span Phe605–Met625, Ala633–Met653, and Gly677–Ile697.

Belongs to the cation transport ATPase (P-type) (TC 3.A.3) family. Type IA subfamily. As to quaternary structure, the system is composed of three essential subunits: KdpA, KdpB and KdpC.

The protein resides in the cell membrane. The catalysed reaction is K(+)(out) + ATP + H2O = K(+)(in) + ADP + phosphate + H(+). Its function is as follows. Part of the high-affinity ATP-driven potassium transport (or Kdp) system, which catalyzes the hydrolysis of ATP coupled with the electrogenic transport of potassium into the cytoplasm. This subunit is responsible for energy coupling to the transport system and for the release of the potassium ions to the cytoplasm. The protein is Potassium-transporting ATPase ATP-binding subunit of Bacillus anthracis (strain CDC 684 / NRRL 3495).